Here is a 203-residue protein sequence, read N- to C-terminus: Urease accessory protein UreG (203 aa).

14 to 21 is a binding site for GTP; the sequence is GPVGSGKT.

This sequence belongs to the SIMIBI class G3E GTPase family. UreG subfamily. Homodimer. UreD, UreF and UreG form a complex that acts as a GTP-hydrolysis-dependent molecular chaperone, activating the urease apoprotein by helping to assemble the nickel containing metallocenter of UreC. The UreE protein probably delivers the nickel.

The protein resides in the cytoplasm. Facilitates the functional incorporation of the urease nickel metallocenter. This process requires GTP hydrolysis, probably effectuated by UreG. This is Urease accessory protein UreG from Agrobacterium fabrum (strain C58 / ATCC 33970) (Agrobacterium tumefaciens (strain C58)).